The primary structure comprises 338 residues: Ferrochelatase (338 aa).

Fe cation is bound by residues His-202 and Glu-283.

It belongs to the ferrochelatase family.

The protein localises to the cytoplasm. It catalyses the reaction heme b + 2 H(+) = protoporphyrin IX + Fe(2+). Its pathway is porphyrin-containing compound metabolism; protoheme biosynthesis; protoheme from protoporphyrin-IX: step 1/1. Catalyzes the ferrous insertion into protoporphyrin IX. This is Ferrochelatase from Acinetobacter baumannii (strain AB307-0294).